A 241-amino-acid polypeptide reads, in one-letter code: Ribonuclease PH (241 aa).

Residues Arg-87 and 125–127 each bind phosphate; that span reads GTR.

This sequence belongs to the RNase PH family. As to quaternary structure, homohexameric ring arranged as a trimer of dimers.

The enzyme catalyses tRNA(n+1) + phosphate = tRNA(n) + a ribonucleoside 5'-diphosphate. Phosphorolytic 3'-5' exoribonuclease that plays an important role in tRNA 3'-end maturation. Removes nucleotide residues following the 3'-CCA terminus of tRNAs; can also add nucleotides to the ends of RNA molecules by using nucleoside diphosphates as substrates, but this may not be physiologically important. Probably plays a role in initiation of 16S rRNA degradation (leading to ribosome degradation) during starvation. This is Ribonuclease PH from Salinispora arenicola (strain CNS-205).